Reading from the N-terminus, the 365-residue chain is GTPase Obg (365 aa).

Residues 1–159 (MKFIDEARIE…RMLKLELKVL (159 aa)) enclose the Obg domain. In terms of domain architecture, OBG-type G spans 160-334 (ADVGLLGMPN…LIYAIKDHLQ (175 aa)). Residues 166–173 (GMPNAGKS), 191–195 (FTTLH), 213–216 (DIPG), 284–287 (NKLD), and 315–317 (SAL) each bind GTP. Mg(2+) contacts are provided by serine 173 and threonine 193.

The protein belongs to the TRAFAC class OBG-HflX-like GTPase superfamily. OBG GTPase family. As to quaternary structure, monomer. Mg(2+) is required as a cofactor.

Its subcellular location is the cytoplasm. Its function is as follows. An essential GTPase which binds GTP, GDP and possibly (p)ppGpp with moderate affinity, with high nucleotide exchange rates and a fairly low GTP hydrolysis rate. Plays a role in control of the cell cycle, stress response, ribosome biogenesis and in those bacteria that undergo differentiation, in morphogenesis control. This Cupriavidus taiwanensis (strain DSM 17343 / BCRC 17206 / CCUG 44338 / CIP 107171 / LMG 19424 / R1) (Ralstonia taiwanensis (strain LMG 19424)) protein is GTPase Obg.